Reading from the N-terminus, the 850-residue chain is Transcription initiation factor TFIID subunit 4B (850 aa).

The segment at 99–240 is sufficient for interaction with ZNF628; the sequence is GTTTIQLPAN…TPSNDARLKA (142 aa). The region spanning 256–353 is the TAFH domain; the sequence is ENVKKCKNFL…VKEVSGDVVI (98 aa). The segment at 504-526 is required for interaction with P65/RELA; sequence PSTLLPQAAGIPQTAKVKQLVVQ. The Nuclear export signal motif lies at 509–549; that stretch reads PQAAGIPQTAKVKQLVVQQPSGSSVNHVTSISHSSPLSTQN. S584 carries the phosphoserine modification. The region spanning 642–691 is the Histone-fold domain; the sequence is PFLVIGALQKRILDIGKKHDITELNSDAVNLISHATQERLRGLLEKLTTI. The segment at 788 to 812 is disordered; it reads KRPLESGNESFKDNPSTSGTSSLTA. Polar residues predominate over residues 794–812; it reads GNESFKDNPSTSGTSSLTA. The tract at residues 818-850 is required for interaction with TAF12; it reads PRITRICLRDLIFCMEQEREMKYSRALYLALLK.

This sequence belongs to the TAF4 family. In terms of assembly, TFIID is composed of TATA binding protein (TBP) and a number of TBP-associated factors (TAFs). Heterodimerizes with TAF12/TFII20 via the C-terminal H2A-like histone-fold domain. This heterodimer forms a histone-like octamer with the TAF6/TAFII70-TAF9/TAFII31 heterodimer. Interacts with P65/RELA homodimers and P65/RELA-REL heterodimers. Interaction with POU2AF1, via its C-terminal activation domain, is required for octamer-dependent transcription. Interacts with ZNF628. Highly expressed in the testes and ovary, whereas lower levels are detected in most other tissues.

The protein resides in the nucleus. It localises to the cytoplasm. In terms of biological role, cell type-specific subunit of the general transcription factor TFIID that may function as a gene-selective coactivator in certain cells. TFIID is a multimeric protein complex that plays a central role in mediating promoter responses to various activators asond repressors. TAF4B is a transcriptional coactivator of the p65/RELA NF-kappa-B subunit. Involved in the activation of a subset of antiapoptotic genes including TNFAIP3. Through interaction with OCBA/POU2AF1, acts as a coactivator of B-cell-specific transcription. Plays a role in spermiogenesis and oogenesis. The sequence is that of Transcription initiation factor TFIID subunit 4B (Taf4b) from Mus musculus (Mouse).